The chain runs to 525 residues: GMP synthase [glutamine-hydrolyzing] (525 aa).

The region spanning 9-207 (RILILDFGSQ…VLDICGCAAL (199 aa)) is the Glutamine amidotransferase type-1 domain. C86 (nucleophile) is an active-site residue. Active-site residues include H181 and E183. The region spanning 208-400 (WTPSNIVDDA…LGLPYDMVYR (193 aa)) is the GMPS ATP-PPase domain. ATP is bound at residue 235–241 (SGGVDSS).

In terms of assembly, homodimer.

It catalyses the reaction XMP + L-glutamine + ATP + H2O = GMP + L-glutamate + AMP + diphosphate + 2 H(+). Its pathway is purine metabolism; GMP biosynthesis; GMP from XMP (L-Gln route): step 1/1. Its function is as follows. Catalyzes the synthesis of GMP from XMP. The chain is GMP synthase [glutamine-hydrolyzing] from Pseudomonas aeruginosa (strain UCBPP-PA14).